Here is a 194-residue protein sequence, read N- to C-terminus: Fe/S biogenesis protein NfuA (194 aa).

Residues cysteine 151 and cysteine 154 each coordinate [4Fe-4S] cluster.

The protein belongs to the NfuA family. As to quaternary structure, homodimer. Requires [4Fe-4S] cluster as cofactor.

Involved in iron-sulfur cluster biogenesis. Binds a 4Fe-4S cluster, can transfer this cluster to apoproteins, and thereby intervenes in the maturation of Fe/S proteins. Could also act as a scaffold/chaperone for damaged Fe/S proteins. The chain is Fe/S biogenesis protein NfuA from Aliivibrio fischeri (strain ATCC 700601 / ES114) (Vibrio fischeri).